Reading from the N-terminus, the 505-residue chain is Lysine--tRNA ligase (505 aa).

Positions 403 and 410 each coordinate Mg(2+).

This sequence belongs to the class-II aminoacyl-tRNA synthetase family. As to quaternary structure, homodimer. Mg(2+) serves as cofactor.

It localises to the cytoplasm. The enzyme catalyses tRNA(Lys) + L-lysine + ATP = L-lysyl-tRNA(Lys) + AMP + diphosphate. The sequence is that of Lysine--tRNA ligase from Methanospirillum hungatei JF-1 (strain ATCC 27890 / DSM 864 / NBRC 100397 / JF-1).